We begin with the raw amino-acid sequence, 274 residues long: MAIHLYKTSTPGTRNGAVDSQVKSNPRNNLIYGQHRCGKGRNARGIITARHRGGGHKRLYRKIDFRRNEKDIYGRIVTIEYDPNRNAYICFIHYGDGEKRYILHPRGAIIGDIIVSGTEVPIKMGNALPLTDMPLGTAIHNIEITLGRGGQLARAAGAVAKLIAKEGKSATLKLPSGEVRLISKNCSATVGQVGNVGVNQKSLGRAGSKCWLGKRPVVRGVVMNPVDHPHGGGEGRAPIGRKKPATPWGHPALGRRSRKRNKYSDNLILRRRSK.

Disordered regions lie at residues 1 to 21 (MAIH…VDSQ) and 225 to 274 (PVDH…RRSK).

This sequence belongs to the universal ribosomal protein uL2 family. In terms of assembly, part of the 50S ribosomal subunit.

It is found in the plastid. The protein resides in the chloroplast. This chain is Large ribosomal subunit protein uL2cz/uL2cy (rpl2-A), found in Gossypium barbadense (Sea Island cotton).